A 429-amino-acid chain; its full sequence is Enolase (429 aa).

Q174 contributes to the (2R)-2-phosphoglycerate binding site. E218 acts as the Proton donor in catalysis. Mg(2+) is bound by residues D254, E295, and D321. (2R)-2-phosphoglycerate is bound by residues K346, R375, S376, and K397. K346 functions as the Proton acceptor in the catalytic mechanism.

The protein belongs to the enolase family. It depends on Mg(2+) as a cofactor.

It is found in the cytoplasm. The protein localises to the secreted. It localises to the cell surface. The catalysed reaction is (2R)-2-phosphoglycerate = phosphoenolpyruvate + H2O. It functions in the pathway carbohydrate degradation; glycolysis; pyruvate from D-glyceraldehyde 3-phosphate: step 4/5. Its function is as follows. Catalyzes the reversible conversion of 2-phosphoglycerate (2-PG) into phosphoenolpyruvate (PEP). It is essential for the degradation of carbohydrates via glycolysis. The polypeptide is Enolase (Methanosarcina acetivorans (strain ATCC 35395 / DSM 2834 / JCM 12185 / C2A)).